The chain runs to 407 residues: tRNA (uracil(54)-C(5))-methyltransferase (407 aa).

4 residues coordinate [4Fe-4S] cluster: cysteine 61, cysteine 67, cysteine 70, and cysteine 137. Residues glutamine 253, tyrosine 279, threonine 284, 300–301 (DS), aspartate 327, and aspartate 341 contribute to the S-adenosyl-L-methionine site. Catalysis depends on cysteine 368, which acts as the Nucleophile. Glutamate 400 (proton acceptor) is an active-site residue.

This sequence belongs to the class I-like SAM-binding methyltransferase superfamily. RNA M5U methyltransferase family.

It catalyses the reaction uridine(54) in tRNA + S-adenosyl-L-methionine = 5-methyluridine(54) in tRNA + S-adenosyl-L-homocysteine + H(+). Its function is as follows. Catalyzes the formation of 5-methyl-uridine at position 54 (m5U54) in tRNA. The sequence is that of tRNA (uracil(54)-C(5))-methyltransferase from Pyrococcus horikoshii (strain ATCC 700860 / DSM 12428 / JCM 9974 / NBRC 100139 / OT-3).